A 924-amino-acid chain; its full sequence is Type II inositol 3,4-bisphosphate 4-phosphatase (924 aa).

A compositionally biased stretch (basic and acidic residues) spans 1–13; that stretch reads MEIKEEGASEEGQ. 3 disordered regions span residues 1-25, 481-516, and 546-569; these read MEIKEEGASEEGQHFLPTAQASDPG, ILKKPPSPKSSTEESSPQDQPPLMRGQDSIPHHSDY, and DGGSEGSGGNNDGEKEPSLADAIP. A C2 domain is found at 23–165; that stretch reads DPGDCQFTSI…LKSKEQLLVL (143 aa).

Belongs to the inositol 3,4-bisphosphate 4-phosphatase family.

The catalysed reaction is a 1,2-diacyl-sn-glycero-3-phospho-(1D-myo-inositol-3,4-bisphosphate) + H2O = a 1,2-diacyl-sn-glycero-3-phospho-(1D-myo-inositol-3-phosphate) + phosphate. It carries out the reaction 1D-myo-inositol 1,3,4-trisphosphate + H2O = 1D-myo-inositol 1,3-bisphosphate + phosphate. It catalyses the reaction 1D-myo-inositol 3,4-bisphosphate + H2O = 1D-myo-inositol 3-phosphate + phosphate. It participates in signal transduction; phosphatidylinositol signaling pathway. With respect to regulation, strongly inhibited by inositol hexakisphosphate. Its function is as follows. Catalyzes the hydrolysis of the 4-position phosphate of phosphatidylinositol 3,4-bisphosphate, inositol 1,3,4-trisphosphate and inositol 3,4-bisphosphate. Plays a role in the late stages of macropinocytosis by dephosphorylating phosphatidylinositol 3,4-bisphosphate in membrane ruffles. Antagonizes the PI3K-AKT/PKB signaling pathway by dephosphorylating phosphoinositides and thereby modulating cell cycle progression and cell survival. The protein is Type II inositol 3,4-bisphosphate 4-phosphatase (INPP4B) of Pongo abelii (Sumatran orangutan).